Consider the following 443-residue polypeptide: MTRLAKGKWRSTLGAMMALAVMVAAIPQARAELVIDITRGVREPMPIAIPVFGGTDAQSSAMGRDVVGVVSNDLQGSGLFRVLDPAAYIQSLPNLAVQPQFADWRAINAQALVQGEVQPQGDGRLRVAFRLWDVFSGQQVVGRAFLTQGDNWRRVSHIIADEIYKAITGEEGYFDTRVVYVAETGPKTNRVKKLAIMDQDGANQRNLTNGESMVLTPRFSPTAQEITYLSYYNSVPRVYLFNIETGRRELLGDFPGMTFAPRFSPDGNKVIMSMALDGNTEIYEMDLRTRRSSRLTNHPSIDTSPSYAPDGRQITFNSDRGGAQQIYVMNADGSGVQRISFGDGRYATPVWSPRGDLIAFTKLKGGRFFIGAMRPDGSGEKILTEGFLVEGPTWAPNGRVLMFFRQDPNGRTTLHSIDVTGYNERQISTPTEASDPAWSPLLP.

Residues 1 to 31 (MTRLAKGKWRSTLGAMMALAVMVAAIPQARA) form the signal peptide. Polar residues predominate over residues 423-432 (NERQISTPTE). Positions 423–443 (NERQISTPTEASDPAWSPLLP) are disordered.

Belongs to the TolB family. The Tol-Pal system is composed of five core proteins: the inner membrane proteins TolA, TolQ and TolR, the periplasmic protein TolB and the outer membrane protein Pal. They form a network linking the inner and outer membranes and the peptidoglycan layer.

Its subcellular location is the periplasm. In terms of biological role, part of the Tol-Pal system, which plays a role in outer membrane invagination during cell division and is important for maintaining outer membrane integrity. The sequence is that of Tol-Pal system protein TolB from Rhodospirillum rubrum (strain ATCC 11170 / ATH 1.1.1 / DSM 467 / LMG 4362 / NCIMB 8255 / S1).